Reading from the N-terminus, the 380-residue chain is Queuine tRNA-ribosyltransferase (380 aa).

Asp89 functions as the Proton acceptor in the catalytic mechanism. Substrate contacts are provided by residues 89–93 (DSGGF), Asp143, Gln187, and Gly214. Residues 245–251 (GVGKPED) form an RNA binding region. Catalysis depends on Asp264, which acts as the Nucleophile. The interval 269–273 (TRNAR) is RNA binding; important for wobble base 34 recognition. Zn(2+) is bound by residues Cys302, Cys304, Cys307, and His333.

This sequence belongs to the queuine tRNA-ribosyltransferase family. In terms of assembly, homodimer. Within each dimer, one monomer is responsible for RNA recognition and catalysis, while the other monomer binds to the replacement base PreQ1. Requires Zn(2+) as cofactor.

The enzyme catalyses 7-aminomethyl-7-carbaguanine + guanosine(34) in tRNA = 7-aminomethyl-7-carbaguanosine(34) in tRNA + guanine. It participates in tRNA modification; tRNA-queuosine biosynthesis. In terms of biological role, catalyzes the base-exchange of a guanine (G) residue with the queuine precursor 7-aminomethyl-7-deazaguanine (PreQ1) at position 34 (anticodon wobble position) in tRNAs with GU(N) anticodons (tRNA-Asp, -Asn, -His and -Tyr). Catalysis occurs through a double-displacement mechanism. The nucleophile active site attacks the C1' of nucleotide 34 to detach the guanine base from the RNA, forming a covalent enzyme-RNA intermediate. The proton acceptor active site deprotonates the incoming PreQ1, allowing a nucleophilic attack on the C1' of the ribose to form the product. After dissociation, two additional enzymatic reactions on the tRNA convert PreQ1 to queuine (Q), resulting in the hypermodified nucleoside queuosine (7-(((4,5-cis-dihydroxy-2-cyclopenten-1-yl)amino)methyl)-7-deazaguanosine). The protein is Queuine tRNA-ribosyltransferase of Proteus mirabilis (strain HI4320).